Reading from the N-terminus, the 61-residue chain is Small ribosomal subunit protein uS14 (61 aa).

Zn(2+) is bound by residues cysteine 24, cysteine 27, cysteine 40, and cysteine 43.

It belongs to the universal ribosomal protein uS14 family. Zinc-binding uS14 subfamily. In terms of assembly, part of the 30S ribosomal subunit. Contacts proteins S3 and S10. It depends on Zn(2+) as a cofactor.

In terms of biological role, binds 16S rRNA, required for the assembly of 30S particles and may also be responsible for determining the conformation of the 16S rRNA at the A site. This is Small ribosomal subunit protein uS14 from Pseudothermotoga lettingae (strain ATCC BAA-301 / DSM 14385 / NBRC 107922 / TMO) (Thermotoga lettingae).